Consider the following 752-residue polypeptide: Multifunctional tryptophan biosynthesis protein (752 aa).

Residues 3-202 form the Glutamine amidotransferase type-1 domain; it reads FTLLIDNYDS…IQMKGGKWGG (200 aa). An L-glutamine-binding site is contributed by 58–60; the sequence is GPG. Cysteine 86 acts as the Nucleophile; for GATase activity in catalysis. Residue 136–137 coordinates L-glutamine; that stretch reads SL. Active-site for GATase activity residues include histidine 176 and glutamate 178. An indole-3-glycerol phosphate synthase region spans residues 231-495; sequence ILNKIHAQRL…DTKAFLRSLI (265 aa). The N-(5'-phosphoribosyl)anthranilate isomerase stretch occupies residues 509-752; it reads LVKICGIRST…VEAFVKAVRG (244 aa).

It carries out the reaction N-(5-phospho-beta-D-ribosyl)anthranilate = 1-(2-carboxyphenylamino)-1-deoxy-D-ribulose 5-phosphate. The catalysed reaction is 1-(2-carboxyphenylamino)-1-deoxy-D-ribulose 5-phosphate + H(+) = (1S,2R)-1-C-(indol-3-yl)glycerol 3-phosphate + CO2 + H2O. The enzyme catalyses chorismate + L-glutamine = anthranilate + pyruvate + L-glutamate + H(+). The protein operates within amino-acid biosynthesis; L-tryptophan biosynthesis; L-tryptophan from chorismate: step 1/5. Its pathway is amino-acid biosynthesis; L-tryptophan biosynthesis; L-tryptophan from chorismate: step 3/5. It participates in amino-acid biosynthesis; L-tryptophan biosynthesis; L-tryptophan from chorismate: step 4/5. Functionally, trifunctional enzyme bearing the Gln amidotransferase (GATase) domain of anthranilate synthase, indole-glycerolphosphate synthase, and phosphoribosylanthranilate isomerase activities. The protein is Multifunctional tryptophan biosynthesis protein (TRP1) of Cryptococcus neoformans var. grubii serotype A (strain H99 / ATCC 208821 / CBS 10515 / FGSC 9487) (Filobasidiella neoformans var. grubii).